The following is a 570-amino-acid chain: Urease subunit alpha (570 aa).

One can recognise a Urease domain in the interval 131-570 (GGMDSHIHFI…LPMAQRYFLF (440 aa)). 3 residues coordinate Ni(2+): H136, H138, and K219. Residue K219 is modified to N6-carboxylysine. H221 provides a ligand contact to substrate. Ni(2+) contacts are provided by H248 and H274. H322 acts as the Proton donor in catalysis. D362 contacts Ni(2+).

Belongs to the metallo-dependent hydrolases superfamily. Urease alpha subunit family. Heterotrimer of UreA (gamma), UreB (beta) and UreC (alpha) subunits. Three heterotrimers associate to form the active enzyme. The cofactor is Ni cation. Carboxylation allows a single lysine to coordinate two nickel ions.

It localises to the cytoplasm. It catalyses the reaction urea + 2 H2O + H(+) = hydrogencarbonate + 2 NH4(+). The protein operates within nitrogen metabolism; urea degradation; CO(2) and NH(3) from urea (urease route): step 1/1. This chain is Urease subunit alpha, found in Sinorhizobium medicae (strain WSM419) (Ensifer medicae).